The sequence spans 232 residues: GFP-like fluorescent chromoprotein dsFP483 (232 aa).

The segment at residues 66–68 (QYG) is a cross-link (2-iminomethyl-5-imidazolinone (Gln-Gly)). At tyrosine 67 the chain carries 2,3-didehydrotyrosine.

This sequence belongs to the GFP family. Contains a chromophore consisting of modified amino acid residues. The chromophore is formed by autocatalytic backbone condensation between Xaa-N and Gly-(N+2), oxidation of Tyr-(N+1) to didehydrotyrosine, and formation of a double bond to the alpha-amino nitrogen of residue Xaa-N. Maturation of the chromophore requires nothing other than molecular oxygen. The precise stereochemistry of the tyrosine has not been determined. In terms of tissue distribution, oral disk.

Pigment protein that is green in color. The protein is GFP-like fluorescent chromoprotein dsFP483 of Discosoma striata (Striped mushroom).